A 701-amino-acid polypeptide reads, in one-letter code: Polyribonucleotide nucleotidyltransferase (701 aa).

Residues Asp485 and Asp491 each coordinate Mg(2+). Residues 552-611 (PRITTLKINPEKIRDVIGKGGATIRALTEETGTTIELEDDGTVKIASSNGEATKEAIRRI) form the KH domain. The 69-residue stretch at 621-689 (GTVYNGKVVR…RQGRVRLSMK (69 aa)) folds into the S1 motif domain.

This sequence belongs to the polyribonucleotide nucleotidyltransferase family. As to quaternary structure, component of the RNA degradosome, which is a multiprotein complex involved in RNA processing and mRNA degradation. Mg(2+) is required as a cofactor.

Its subcellular location is the cytoplasm. The enzyme catalyses RNA(n+1) + phosphate = RNA(n) + a ribonucleoside 5'-diphosphate. Involved in mRNA degradation. Catalyzes the phosphorolysis of single-stranded polyribonucleotides processively in the 3'- to 5'-direction. This chain is Polyribonucleotide nucleotidyltransferase, found in Shewanella piezotolerans (strain WP3 / JCM 13877).